We begin with the raw amino-acid sequence, 411 residues long: Alpha-1-antiproteinase (411 aa).

A signal peptide spans 1 to 24 (MAPSISRGLLLLAALCCLAPSFLA). At Ser-33 the chain carries Phosphoserine. Asn-64, Asn-101, and Asn-265 each carry an N-linked (GlcNAc...) asparagine glycan. An RCL region spans residues 367–386 (GATVVEAVPMSLPPQVKFDH). Ser-377 bears the Phosphoserine mark.

The protein belongs to the serpin family. In terms of assembly, interacts with CELA2A. Interacts with ERGIC3 and LMAN1/ERGIC53. Interacts with PRSS1/Trypsin. In terms of tissue distribution, plasma.

The protein resides in the secreted. Its function is as follows. Inhibitor of serine proteases. The primary target is elastase, but also has a moderate affinity for plasmin and thrombin. This Rattus norvegicus (Rat) protein is Alpha-1-antiproteinase (Serpina1).